Consider the following 99-residue polypeptide: UPF0235 protein Avin_03050 (99 aa).

A disordered region spans residues 66–99 (VSLESGESNRQKRVRIRRPRQLPALPGLAPRPDA). Basic residues predominate over residues 76–85 (QKRVRIRRPR).

The protein belongs to the UPF0235 family.

The polypeptide is UPF0235 protein Avin_03050 (Azotobacter vinelandii (strain DJ / ATCC BAA-1303)).